Here is a 318-residue protein sequence, read N- to C-terminus: Methionyl-tRNA formyltransferase (318 aa).

(6S)-5,6,7,8-tetrahydrofolate is bound at residue 110–113 (SLLP).

The protein belongs to the Fmt family.

The catalysed reaction is L-methionyl-tRNA(fMet) + (6R)-10-formyltetrahydrofolate = N-formyl-L-methionyl-tRNA(fMet) + (6S)-5,6,7,8-tetrahydrofolate + H(+). Its function is as follows. Attaches a formyl group to the free amino group of methionyl-tRNA(fMet). The formyl group appears to play a dual role in the initiator identity of N-formylmethionyl-tRNA by promoting its recognition by IF2 and preventing the misappropriation of this tRNA by the elongation apparatus. This chain is Methionyl-tRNA formyltransferase, found in Latilactobacillus sakei subsp. sakei (strain 23K) (Lactobacillus sakei subsp. sakei).